The following is a 339-amino-acid chain: Biotin synthase (339 aa).

A Radical SAM core domain is found at 47-276 (FYGKKVKLNM…SKEIRISGGR (230 aa)). Residues C65, C69, and C72 each coordinate [4Fe-4S] cluster. Residues C109, C141, C201, and R271 each coordinate [2Fe-2S] cluster.

This sequence belongs to the radical SAM superfamily. Biotin synthase family. Homodimer. Requires [4Fe-4S] cluster as cofactor. It depends on [2Fe-2S] cluster as a cofactor.

The catalysed reaction is (4R,5S)-dethiobiotin + (sulfur carrier)-SH + 2 reduced [2Fe-2S]-[ferredoxin] + 2 S-adenosyl-L-methionine = (sulfur carrier)-H + biotin + 2 5'-deoxyadenosine + 2 L-methionine + 2 oxidized [2Fe-2S]-[ferredoxin]. Its pathway is cofactor biosynthesis; biotin biosynthesis; biotin from 7,8-diaminononanoate: step 2/2. Catalyzes the conversion of dethiobiotin (DTB) to biotin by the insertion of a sulfur atom into dethiobiotin via a radical-based mechanism. In Bacillus velezensis (strain DSM 23117 / BGSC 10A6 / LMG 26770 / FZB42) (Bacillus amyloliquefaciens subsp. plantarum), this protein is Biotin synthase.